Here is a 391-residue protein sequence, read N- to C-terminus: Nucleosome assembly protein 1-like 1 (391 aa).

The segment covering 1-10 (MADIDNKEQS) has biased composition (basic and acidic residues). Positions 1 to 32 (MADIDNKEQSELDQDLDDVEEVEEEETGEETK) are disordered. An N-acetylalanine modification is found at alanine 2. At serine 10 the chain carries Phosphoserine. Over residues 11–28 (ELDQDLDDVEEVEEEETG) the composition is skewed to acidic residues. Phosphothreonine occurs at positions 62 and 64. A Phosphoserine modification is found at serine 69. Position 116 is an N6-acetyllysine (lysine 116). An NAP1L motif motif is present at residues 125–150 (YEPTEEECEWKPDEEDEISEELKEKA). Positions 132 to 143 (CEWKPDEEDEIS) are enriched in acidic residues. The segment at 132 to 163 (CEWKPDEEDEISEELKEKAKVEDEKKDEEKED) is disordered. Serine 143 carries the post-translational modification Phosphoserine. Residues 144–163 (EELKEKAKVEDEKKDEEKED) show a composition bias toward basic and acidic residues. The Nuclear localization signal signature appears at 273 to 279 (IKKKQKH). The disordered stretch occupies residues 345–391 (EAIEDDDDDYDEEGEEADEEGEEEGDEENDPDYDPKKDQNPAECKQQ). Over residues 346–376 (AIEDDDDDYDEEGEEADEEGEEEGDEENDPD) the composition is skewed to acidic residues. 5-glutamyl polyglycine is present on residues glutamate 359 and glutamate 360. A compositionally biased stretch (basic and acidic residues) spans 377–391 (YDPKKDQNPAECKQQ). Position 388 is a cysteine methyl ester (cysteine 388). A lipid anchor (S-farnesyl cysteine) is attached at cysteine 388. The propeptide at 389-391 (KQQ) is removed in mature form.

It belongs to the nucleosome assembly protein (NAP) family. Homodimer. The dimer binds strongly and sequentially to single and double H2A-H2B heterodimers. Interacts with ERCC6; this interaction increases ERCC6 processivity. Interacts with RAD54. Interacts with SETD1A. Polyglycylated by TTLL10 on glutamate residues, resulting in polyglycine chains on the gamma-carboxyl group. Both polyglutamylation and polyglycylation modifications can coexist on the same protein on adjacent residues, and lowering polyglycylation levels increases polyglutamylation, and reciprocally. In terms of processing, polyglutamylated by TTLL4 on glutamate residues, resulting in polyglutamate chains on the gamma-carboxyl group. Both polyglutamylation and polyglycylation modifications can coexist on the same protein on adjacent residues, and lowering polyglycylation levels increases polyglutamylation, and reciprocally.

It is found in the nucleus. The protein resides in the melanosome. The protein localises to the cytoplasm. Histone chaperone that plays a role in the nuclear import of H2A-H2B and nucleosome assembly. Also participates in several important DNA repair mechanisms: greatly enhances ERCC6-mediated chromatin remodeling which is essential for transcription-coupled nucleotide excision DNA repair. Also stimulates homologous recombination (HR) by RAD51 and RAD54 which is essential in mitotic DNA double strand break (DSB) repair. Plays a key role in the regulation of embryonic neurogenesis. Promotes the proliferation of neural progenitors and inhibits neuronal differentiation during cortical development. Regulates neurogenesis via the modulation of RASSF10; regulates RASSF10 expression by promoting SETD1A-mediated H3K4 methylation at the RASSF10 promoter. The chain is Nucleosome assembly protein 1-like 1 (NAP1L1) from Bos taurus (Bovine).